We begin with the raw amino-acid sequence, 507 residues long: Lysine--tRNA ligase (507 aa).

A 'HIGH' region motif is present at residues 26 to 34; that stretch reads PSGPIHVGN. The 'KMSKS' region motif lies at 270-274; sequence AMHSS.

It belongs to the class-I aminoacyl-tRNA synthetase family.

The protein resides in the cytoplasm. The enzyme catalyses tRNA(Lys) + L-lysine + ATP = L-lysyl-tRNA(Lys) + AMP + diphosphate. The sequence is that of Lysine--tRNA ligase (lysS) from Thermoplasma acidophilum (strain ATCC 25905 / DSM 1728 / JCM 9062 / NBRC 15155 / AMRC-C165).